The chain runs to 93 residues: Cobalt transport protein CbiN (93 aa).

Transmembrane regions (helical) follow at residues 5–25 (LMLL…NHGG) and 63–83 (LLFT…LGYC).

Belongs to the CbiN family. As to quaternary structure, forms an energy-coupling factor (ECF) transporter complex composed of an ATP-binding protein (A component, CbiO), a transmembrane protein (T component, CbiQ) and 2 possible substrate-capture proteins (S components, CbiM and CbiN) of unknown stoichimetry.

The protein resides in the cell inner membrane. It participates in cofactor biosynthesis; adenosylcobalamin biosynthesis. Its function is as follows. Part of the energy-coupling factor (ECF) transporter complex CbiMNOQ involved in cobalt import. The chain is Cobalt transport protein CbiN from Salmonella paratyphi B (strain ATCC BAA-1250 / SPB7).